The sequence spans 88 residues: Small ribosomal subunit protein bS20 (88 aa).

Basic and acidic residues predominate over residues 1–23; sequence MPNTKSAEKALRVADANRQENRR. The tract at residues 1–29 is disordered; sequence MPNTKSAEKALRVADANRQENRRAKSQVK.

The protein belongs to the bacterial ribosomal protein bS20 family.

In terms of biological role, binds directly to 16S ribosomal RNA. The chain is Small ribosomal subunit protein bS20 from Dehalococcoides mccartyi (strain ATCC BAA-2100 / JCM 16839 / KCTC 5957 / BAV1).